The chain runs to 201 residues: MAGKSSLFKIILLGDGGVGKSSLMNRYVTNKFDSQLFHTIGVEFLNKDLEVDGHFVTMQIWDTAGQERFRSLRTPFYRGSDCCLLTFSVDDSQSFQNLSNWKKEFIYYADVKEPESFPFVILGNKTDIKERQVSTEEAQAWCKDNGDYPYFETSAKDSTNVAAAFEEAVRRILATEDRSDHLIQTDTVNLHRKPKPNSSCC.

The residue at position 2 (A2) is an N-acetylalanine. Residues G17, V18, G19, K20, S21, S22, S34, H38, and T39 each coordinate GTP. Residue S21 participates in Mg(2+) binding. A Switch 1 motif is present at residues K31–V42. Phosphoserine is present on S34. Residues T39 and D62 each contribute to the Mg(2+) site. The Switch 2 motif lies at A64–R78. The GTP site is built by G65, N124, K125, D127, and K156. Position 179 is a phosphoserine (S179). A Phosphothreonine modification is found at T187. 2 S-geranylgeranyl cysteine lipidation sites follow: C200 and C201.

Belongs to the small GTPase superfamily. Rab family. As to quaternary structure, interacts (preferentially in its GTP-bound form) with GCC2 (via its GRIP domain). Interacts (GTP-bound form) with SGSM1; the GDP-bound form has much lower affinity for SGSM1. Interacts with SGSM2. The GTP-bound form but not the GDP-bound form interacts with HPS4 and the BLOC-3 complex (heterodimer of HPS1 and HPS4) but does not interact with HPS1 alone. Interacts (GTP-bound form) with NDE1; two RAB9A-GTP molecules lie on the opposite sides of the NDE1 homodimer; the interaction leads to RAB9A-dynein motor tethering. Interacts (GTP-bound form) with NDEL1. It depends on Mg(2+) as a cofactor.

It is found in the cell membrane. The protein resides in the endoplasmic reticulum membrane. Its subcellular location is the golgi apparatus membrane. The protein localises to the late endosome. It localises to the cytoplasmic vesicle. It is found in the phagosome membrane. The protein resides in the phagosome. Its subcellular location is the cytoplasmic vesicle membrane. The protein localises to the melanosome. The enzyme catalyses GTP + H2O = GDP + phosphate + H(+). With respect to regulation, regulated by guanine nucleotide exchange factors (GEFs) which promote the exchange of bound GDP for free GTP. Regulated by GTPase activating proteins (GAPs) which increase the GTP hydrolysis activity. Inhibited by GDP dissociation inhibitors (GDIs). Functionally, the small GTPases Rab are key regulators of intracellular membrane trafficking, from the formation of transport vesicles to their fusion with membranes. Rabs cycle between an inactive GDP-bound form and an active GTP-bound form that is able to recruit to membranes different sets of downstream effectors directly responsible for vesicle formation, movement, tethering and fusion. RAB9A is involved in the transport of proteins between the endosomes and the trans-Golgi network (TGN). Specifically uses NDE1/NDEL1 as an effector to interact with the dynein motor complex in order to control retrograde trafficking of RAB9-associated late endosomes to the TGN. Involved in the recruitment of SGSM2 to melanosomes and is required for the proper trafficking of melanogenic enzymes TYR, TYRP1 and DCT/TYRP2 to melanosomes in melanocytes. In Rattus norvegicus (Rat), this protein is Ras-related protein Rab-9A.